We begin with the raw amino-acid sequence, 165 residues long: MFKKLFGLGSKTNEETIVAPLTGAVKNIEEVPDPVFAGRMMGDGVAIDPTEGVVVSPVDGEIVQLFHTKHAIGIKAKNGTEILIHVGLETVKMEGEGFEAHVSEGQAVKAGDKLISFDLELIREKAKSTITPIVITNTDAAESIKTTVGVTATKGSTEVMKVTMK.

A PTS EIIA type-1 domain is found at 33–137; the sequence is DPVFAGRMMG…STITPIVITN (105 aa). Zn(2+)-binding residues include His-70 and His-85. The active-site Tele-phosphohistidine intermediate; for EIIA activity is His-85. Position 85 is a phosphohistidine; by HPr (His-85).

In terms of assembly, heterodimer with glycerol kinase (glpk). It depends on Zn(2+) as a cofactor.

It is found in the cytoplasm. Its function is as follows. The phosphoenolpyruvate-dependent sugar phosphotransferase system (sugar PTS), a major carbohydrate active transport system, catalyzes the phosphorylation of incoming sugar substrates concomitantly with their translocation across the cell membrane. The enzyme II complex composed of PtsG and Crr is involved in glucose transport. The polypeptide is PTS system glucose-specific EIIA component (crr) (Bacillus anthracis).